The chain runs to 522 residues: Lysine--tRNA ligase (522 aa).

The 'HIGH' region signature appears at proline 44–threonine 52. A 'KMSKS' region motif is present at residues lysine 290 to serine 294. Lysine 293 is an ATP binding site.

Belongs to the class-I aminoacyl-tRNA synthetase family.

The protein resides in the cytoplasm. The enzyme catalyses tRNA(Lys) + L-lysine + ATP = L-lysyl-tRNA(Lys) + AMP + diphosphate. The protein is Lysine--tRNA ligase of Rickettsia massiliae (strain Mtu5).